The following is a 1111-amino-acid chain: Lysylphosphatidylglycerol biosynthesis bifunctional protein LysX (1111 aa).

A phosphatidylglycerol lysyltransferase region spans residues 1 to 612 (MTLTSPPRTR…VLHHDGTAPD (612 aa)). A run of 7 helical transmembrane segments spans residues 18 to 38 (VPAA…IASV), 60 to 80 (FPDT…ALAA), 84 to 104 (IAWW…VADL), 118 to 138 (VIGL…RPLF), 152 to 172 (GVLA…LELF), 209 to 229 (VNAL…IVLF), and 308 to 328 (AWLA…ASVG). The lysine--tRNA ligase stretch occupies residues 613–1111 (MSGLRTDTAD…TLPFPLARPR (499 aa)). The OB DNA-binding region spans 674–747 (VAGRVLRIRD…GTRSLLVRHW (74 aa)). 2 residues coordinate Mg(2+): D1023 and E1030.

The protein in the N-terminal section; belongs to the LPG synthetase family. This sequence in the C-terminal section; belongs to the class-II aminoacyl-tRNA synthetase family. Requires Mg(2+) as cofactor.

The protein localises to the cell membrane. The enzyme catalyses tRNA(Lys) + L-lysine + ATP = L-lysyl-tRNA(Lys) + AMP + diphosphate. The catalysed reaction is L-lysyl-tRNA(Lys) + a 1,2-diacyl-sn-glycero-3-phospho-(1'-sn-glycerol) = a 1,2-diacyl-sn-glycero-3-phospho-1'-(3'-O-L-lysyl)-sn-glycerol + tRNA(Lys). Catalyzes the production of L-lysyl-tRNA(Lys)transfer and the transfer of a lysyl group from L-lysyl-tRNA(Lys) to membrane-bound phosphatidylglycerol (PG), which produces lysylphosphatidylglycerol (LPG), one of the components of the bacterial membrane with a positive net charge. LPG synthesis contributes to the resistance to cationic antimicrobial peptides (CAMPs) and likely protects M.tuberculosis against the CAMPs produced by competiting microorganisms (bacteriocins). In fact, the modification of anionic phosphatidylglycerol with positively charged L-lysine results in repulsion of the peptides. This is Lysylphosphatidylglycerol biosynthesis bifunctional protein LysX (lysX) from Mycobacterium sp. (strain JLS).